A 376-amino-acid polypeptide reads, in one-letter code: Glutamate 5-kinase (376 aa).

K10 is a binding site for ATP. The substrate site is built by S50, D137, and N149. ATP is bound at residue 169–170; sequence TD. The PUA domain maps to 275-353; sequence RGRLVLDAGA…AEIAGVLGFM (79 aa).

It belongs to the glutamate 5-kinase family.

The protein localises to the cytoplasm. It carries out the reaction L-glutamate + ATP = L-glutamyl 5-phosphate + ADP. It functions in the pathway amino-acid biosynthesis; L-proline biosynthesis; L-glutamate 5-semialdehyde from L-glutamate: step 1/2. Its function is as follows. Catalyzes the transfer of a phosphate group to glutamate to form L-glutamate 5-phosphate. The chain is Glutamate 5-kinase from Alcanivorax borkumensis (strain ATCC 700651 / DSM 11573 / NCIMB 13689 / SK2).